We begin with the raw amino-acid sequence, 358 residues long: CCAAT/enhancer-binding protein alpha (358 aa).

A disordered region spans residues 1–55 (MESADFYEAEPRPPMSSHLQSPPHAPSNAAFGFPRGAGPAPPPAPPAAPEPLGGI). The tract at residues 1-70 (MESADFYEAE…SIDISAYIDP (70 aa)) is required to repress E2F1:TFDP1-mediated transcription, to inhibit cell cycle and to induce adipocyte differentiation. Positions 29-38 (AAFGFPRGAG) are enriched in low complexity. Over residues 39 to 49 (PAPPPAPPAAP) the composition is skewed to pro residues. The required for interaction with TRIB1 stretch occupies residues 54–72 (GICEHETSIDISAYIDPAA). The segment at 126-200 (PPGYGCAAAG…HASPAHLAAP (75 aa)) is required to induce adipocyte differentiation. An N6-acetyllysine; alternate modification is found at K159. Residue K159 forms a Glycyl lysine isopeptide (Lys-Gly) (interchain with G-Cter in SUMO); alternate linkage. A Glycyl lysine isopeptide (Lys-Gly) (interchain with G-Cter in SUMO2); alternate cross-link involves residue K159. Disordered stretches follow at residues 176–195 (LFPY…ASPA) and 213–310 (TMHL…NVET). Over residues 179 to 191 (YQPPPPPPPPHPH) the composition is skewed to pro residues. The segment at 180-194 (QPPPPPPPPHPHASP) is required to functionally cooperate with SREBF1 in promoter activation. Position 193 is a phosphoserine (S193). Pro residues predominate over residues 220–234 (HPTPPPTPVPSPHPA). T222 and T226 each carry phosphothreonine; by GSK3. Residue S230 is modified to Phosphoserine; by GSK3. The segment at 240–358 (AGLPGPGGSL…SLVKAMGNCA (119 aa)) is interaction with FOXO1. The segment covering 261-271 (TGGGGGGGAGA) has biased composition (gly residues). The span at 276-292 (KSVDKNSNEYRVRRERN) shows a compositional bias: basic and acidic residues. A bZIP domain is found at 282-345 (SNEYRVRRER…DTLRGIFRQL (64 aa)). Residues 285–300 (YRVRRERNNIAVRKSR) mediate DNA binding. A basic motif region spans residues 286–313 (RVRRERNNIAVRKSRDKAKQRNVETQQK). The segment at 317–345 (LTSDNDRLRKRVEQLSRELDTLRGIFRQL) is leucine-zipper.

It belongs to the bZIP family. C/EBP subfamily. Binds DNA as a homodimer and as a heterodimer. Can form stable heterodimers with CEBPB, CEBPD, CEBPE and CEBPG. Can form stable homodimers (also isoform 2 and isoform 3 dimers) and heterodimers with CEBPB (with isoform 2 and isoform 3) and CEBPG. Interacts with PRDM16. Interacts with UBN1. Interacts with ZNF638; this interaction increases transcriptional activation. Interacts with the complex TFDP2:E2F1; the interaction prevents CEBPA binding to target gene promoters and represses its transcriptional activity. Interacts with RB1. Interacts (when phosphorylated at Ser-193) with CDK2, CDK4, E2F4 and SMARCA2. Interacts with SREBPF1. Interacts with FOXO1 (via the Fork-head domain); the interaction increases when FOXO1 is deacetylated. Interacts with SIX1. Interacts (via recognition sequence) with TRIB1. As to quaternary structure, interacts with TAF1A and UBTF. In terms of assembly, interacts with NPM1. Sumoylated, sumoylation blocks the inhibitory effect on cell proliferation by disrupting the interaction with SMARCA2. Post-translationally, phosphorylation at Ser-193 is required for interaction with CDK2, CDK4 and SWI/SNF complex leading to cell cycle inhibition. Dephosphorylated at Ser-193 by protein phosphatase 2A (PP2A) through PI3K/AKT signaling pathway regulation. Phosphorylation at Thr-222 and Thr-226 by GSK3 is constitutive in adipose tissue and lung. In liver, both Thr-222 and Thr-226 are phosphorylated only during feeding but not during fasting. Phosphorylation of the GSK3 consensus sites selectively decreases transactivation activity on IRE-controlled promoters. In terms of processing, ubiquitinated by COP1 upon interaction with TRIB1. Isoform 2 and isoform 3 are expressed in liver (at protein level).

The protein localises to the nucleus. The protein resides in the nucleolus. In terms of biological role, transcription factor that coordinates proliferation arrest and the differentiation of myeloid progenitors, adipocytes, hepatocytes, and cells of the lung and the placenta. Binds directly to the consensus DNA sequence 5'-T[TG]NNGNAA[TG]-3' acting as an activator on distinct target genes. During early embryogenesis, plays essential and redundant functions with CEBPB. Essential for the transition from common myeloid progenitors (CMP) to granulocyte/monocyte progenitors (GMP). Critical for the proper development of the liver and the lung. Necessary for terminal adipocyte differentiation, is required for postnatal maintenance of systemic energy homeostasis and lipid storage. To regulate these different processes at the proper moment and tissue, interplays with other transcription factors and modulators. Down-regulates the expression of genes that maintain cells in an undifferentiated and proliferative state through E2F1 repression, which is critical for its ability to induce adipocyte and granulocyte terminal differentiation. Reciprocally E2F1 blocks adipocyte differentiation by binding to specific promoters and repressing CEBPA binding to its target gene promoters. Proliferation arrest also depends on a functional binding to SWI/SNF complex. In liver, regulates gluconeogenesis and lipogenesis through different mechanisms. To regulate gluconeogenesis, functionally cooperates with FOXO1 binding to IRE-controlled promoters and regulating the expression of target genes such as PCK1 or G6PC1. To modulate lipogenesis, interacts and transcriptionally synergizes with SREBF1 in promoter activation of specific lipogenic target genes such as ACAS2. In adipose tissue, seems to act as FOXO1 coactivator accessing to ADIPOQ promoter through FOXO1 binding sites. Its function is as follows. Can act as dominant-negative. Binds DNA and have transctivation activity, even if much less efficiently than isoform 2. Does not inhibit cell proliferation. Directly and specifically enhances ribosomal DNA transcription interacting with RNA polymerase I-specific cofactors and inducing histone acetylation. The protein is CCAAT/enhancer-binding protein alpha of Rattus norvegicus (Rat).